We begin with the raw amino-acid sequence, 164 residues long: Ribosome maturation factor RimM (164 aa).

One can recognise a PRC barrel domain in the interval 92-164 (PDSEYYVANL…FVVIVPPEFI (73 aa)).

This sequence belongs to the RimM family. In terms of assembly, binds ribosomal protein uS19.

It localises to the cytoplasm. Functionally, an accessory protein needed during the final step in the assembly of 30S ribosomal subunit, possibly for assembly of the head region. Essential for efficient processing of 16S rRNA. May be needed both before and after RbfA during the maturation of 16S rRNA. It has affinity for free ribosomal 30S subunits but not for 70S ribosomes. The chain is Ribosome maturation factor RimM from Orientia tsutsugamushi (strain Ikeda) (Rickettsia tsutsugamushi).